The sequence spans 62 residues: Andropin (62 aa).

The N-terminal stretch at 1–22 (MKYFSVLVVLTLILAIVDQSDA) is a signal peptide.

Belongs to the andropin family. Ejaculatory duct of adult males.

The protein resides in the secreted. Its function is as follows. Male-specific peptide with moderate activity against Gram-positive bacteria. The chain is Andropin (Anp) from Drosophila teissieri (Fruit fly).